The chain runs to 687 residues: Ataxin-1-like (687 aa).

The segment covering 1 to 19 (MKPVHERSQECLPPKKRDL) has biased composition (basic and acidic residues). Disordered regions lie at residues 1-46 (MKPV…SEWS), 185-223 (ATPP…LDLA), and 261-294 (SALE…KGES). Residues 20–197 (PVTSEDMGRT…PPQAASPAQS (178 aa)) form an interaction with NCOR2 and ATXN1 region. The self-association stretch occupies residues 20–197 (PVTSEDMGRT…PPQAASPAQS (178 aa)). Polar residues-rich tracts occupy residues 28 to 43 (RTTS…SDAS) and 198 to 219 (FNKS…NTQP). The segment covering 272–283 (RQRERNVRRESE) has biased composition (basic and acidic residues). The residue at position 282 (Ser282) is a Phosphoserine. At Thr328 the chain carries Phosphothreonine. Residues 356–379 (DEPSPLNLSHHNLDHQGEGRGSAR) form a disordered region. Residue Ser359 is modified to Phosphoserine. In terms of domain architecture, AXH spans 455–586 (PPPVTSSHLP…SISLQSLNSN (132 aa)). Residues 587 to 649 (SVSQASCAPP…PGAQACWPAP (63 aa)) form a disordered region.

This sequence belongs to the ATXN1 family. As to quaternary structure, homodimer. Interacts (via AXH domain) with NCOR2. Interacts with ATXN1 and CIC. Directly interacts with RBPJ; this interaction is disrupted in the presence of Notch intracellular domain. Competes with ATXN1 for RBPJ-binding. Found in a complex with CIC and ATXN1. In terms of tissue distribution, expressed in the cortex and hypothalamus (at protein level). Expressed in neuronal cells. Highly expressed in Purkinje cells of cerebellum.

Its subcellular location is the nucleus. It localises to the cell projection. It is found in the dendrite. Chromatin-binding factor that repress Notch signaling in the absence of Notch intracellular domain by acting as a CBF1 corepressor. Binds to the HEY promoter and might assist, along with NCOR2, RBPJ-mediated repression. Can suppress the cytotoxicity of ATXN1 in spinocerebellar ataxia type 1 (SCA1). In concert with CIC and ATXN1, involved in brain development. The polypeptide is Ataxin-1-like (Atxn1l) (Mus musculus (Mouse)).